An 826-amino-acid chain; its full sequence is Ferric-pyoverdine M114 receptor PbuA (826 aa).

Residues 1–44 (MSASRFMLRPLTRALLMHGATRTRLAGTGLGLALTLTAAPYVQA) form the signal peptide. The TonB box signature appears at 110–119 (DGNTVTVLGP). The 112-residue stretch at 160 to 271 (SLKETPQSVT…TAGGVNFVRK (112 aa)) folds into the TBDR plug domain. One can recognise a TBDR beta-barrel domain in the interval 276 to 826 (TAHTQLSLSA…NFVMSVKADF (551 aa)). The TonB C-terminal box motif lies at 809-826 (GNFYGDPRNFVMSVKADF).

Belongs to the TonB-dependent receptor family.

It is found in the cell outer membrane. Specific receptor for the siderophore ferric pyoverdine (pseudobactin) M114. In Pseudomonas sp. (strain M114), this protein is Ferric-pyoverdine M114 receptor PbuA (pbuA).